Here is a 293-residue protein sequence, read N- to C-terminus: N-acetylneuraminate lyase (293 aa).

Aceneuramate is bound by residues Ser-48 and Ser-49. Tyr-137 acts as the Proton donor in catalysis. Lys-165 serves as the catalytic Schiff-base intermediate with substrate. Residues Thr-167, Gly-189, Asp-191, Glu-192, and Ser-208 each contribute to the aceneuramate site.

Belongs to the DapA family. NanA subfamily. Homotetramer.

It localises to the cytoplasm. The enzyme catalyses aceneuramate = aldehydo-N-acetyl-D-mannosamine + pyruvate. Its pathway is amino-sugar metabolism; N-acetylneuraminate degradation; D-fructose 6-phosphate from N-acetylneuraminate: step 1/5. In terms of biological role, catalyzes the reversible aldol cleavage of N-acetylneuraminic acid (sialic acid; Neu5Ac) to form pyruvate and N-acetylmannosamine (ManNAc) via a Schiff base intermediate. The polypeptide is N-acetylneuraminate lyase (Staphylococcus aureus (strain MRSA252)).